Here is a 133-residue protein sequence, read N- to C-terminus: Ycf54-like protein (133 aa).

Belongs to the ycf54 family.

The sequence is that of Ycf54-like protein from Synechocystis sp. (strain ATCC 27184 / PCC 6803 / Kazusa).